The primary structure comprises 324 residues: MINFSSFYQHIAQDERLFHWLDTLPAQLSEWRAHALHGHFASWERMLENLPEITPTELNLKQGVIANKTPALSTGEQLGLTNILKALMPWRKGPFSLYGVNIDTEWRSDWKWDRVLPHLSPLKGRLVLDVGCGSGYHMWRMLGEGADFVVGIDPTQLFLCQFEAVRKLLGNDQRAHLIPVGIEQMPELNAFDTVFSMGVLYHRRSPLDHLWQLKNQLVSGGELVLESLVIDGDEFQCLIPGERYAQMRNVYFIPSAKMLKVWLEKCGFKDVRIVDENVTSLEEQRKTDWMVTDSLEAFLDPLDHTKTVEGYPAPKRAILIATKP.

Carboxy-S-adenosyl-L-methionine is bound by residues lysine 92, tryptophan 106, lysine 111, glycine 131, 153–155 (DPT), 182–183 (IE), methionine 197, tyrosine 201, and arginine 316.

This sequence belongs to the class I-like SAM-binding methyltransferase superfamily. CmoB family. As to quaternary structure, homotetramer.

The enzyme catalyses carboxy-S-adenosyl-L-methionine + 5-hydroxyuridine(34) in tRNA = 5-carboxymethoxyuridine(34) in tRNA + S-adenosyl-L-homocysteine + H(+). In terms of biological role, catalyzes carboxymethyl transfer from carboxy-S-adenosyl-L-methionine (Cx-SAM) to 5-hydroxyuridine (ho5U) to form 5-carboxymethoxyuridine (cmo5U) at position 34 in tRNAs. This chain is tRNA U34 carboxymethyltransferase, found in Proteus mirabilis (strain HI4320).